The following is a 228-amino-acid chain: tRNA (carboxymethyluridine(34)-5-O)-methyltransferase (228 aa).

The protein localises to the cytoplasm. The protein resides in the nucleus. It carries out the reaction 5-(carboxymethyl)uridine(34) in tRNA + S-adenosyl-L-methionine = 5-(2-methoxy-2-oxoethyl)uridine(34) in tRNA + S-adenosyl-L-homocysteine. Required for the methylation of the wobble bases at position 34 in tRNA. Appears to have a role in stress-response. The chain is tRNA (carboxymethyluridine(34)-5-O)-methyltransferase (trm9) from Schizosaccharomyces pombe (strain 972 / ATCC 24843) (Fission yeast).